The following is a 188-amino-acid chain: Elongation factor P (188 aa).

A disordered region spans residues 139–163; sequence PVTKGQTASSSYKPATLSNGVRTQV. A compositionally biased stretch (polar residues) spans 142 to 160; the sequence is KGQTASSSYKPATLSNGVR.

Belongs to the elongation factor P family.

Its subcellular location is the cytoplasm. It functions in the pathway protein biosynthesis; polypeptide chain elongation. Involved in peptide bond synthesis. Stimulates efficient translation and peptide-bond synthesis on native or reconstituted 70S ribosomes in vitro. Probably functions indirectly by altering the affinity of the ribosome for aminoacyl-tRNA, thus increasing their reactivity as acceptors for peptidyl transferase. The polypeptide is Elongation factor P (Methylobacterium nodulans (strain LMG 21967 / CNCM I-2342 / ORS 2060)).